The chain runs to 216 residues: MAGRGGAARPNGPAAGNKICQFKLVLLGESAVGKSSLVLRFVKGQFHEYQESTIGAAFLTQTVCLDDTTVKFEIWDTAGQERYHSLAPMYYRGAQAAIVVYDITNTDTFARAKNWVKELQRQASPNIVIALAGNKADLASKRAVEFQEAQAYADDNSLLFMETSAKTAMNVNEIFMAIAKKLPKNEPQNAAGAPSRNRGVDLQENSPASRSQCCSN.

GTP contacts are provided by serine 30, alanine 31, glycine 33, lysine 34, serine 35, serine 36, histidine 47, glutamate 48, threonine 53, and glycine 79. Serine 35 contributes to the Mg(2+) binding site. Short sequence motifs (switch) lie at residues 45–57 (QFHE…IGAA) and 78–94 (AGQE…YRGA). Mg(2+) is bound at residue threonine 53. Phosphoserine is present on serine 85. GTP contacts are provided by asparagine 134, lysine 135, aspartate 137, alanine 165, and lysine 166. The interval 185 to 216 (NEPQNAAGAPSRNRGVDLQENSPASRSQCCSN) is disordered. Polar residues predominate over residues 203-216 (QENSPASRSQCCSN). 2 S-geranylgeranyl cysteine lipidation sites follow: cysteine 213 and cysteine 214.

This sequence belongs to the small GTPase superfamily. Rab family. In terms of assembly, interacts with EEA1 and INCA1. Interacts with GDI1, GDI2, CHML and CHM; phosphorylation at Ser-85 disrupts this interaction. It depends on Mg(2+) as a cofactor. In terms of processing, phosphorylation of Ser-85 in the switch II region by LRRK2 prevents the association of RAB regulatory proteins, including CHM, CHML and RAB GDP dissociation inhibitors GDI1 and GDI2.

Its subcellular location is the cell membrane. It localises to the early endosome membrane. The protein resides in the melanosome. The enzyme catalyses GTP + H2O = GDP + phosphate + H(+). Its activity is regulated as follows. Regulated by guanine nucleotide exchange factors (GEFs) which promote the exchange of bound GDP for free GTP. Regulated by GTPase activating proteins (GAPs) which increase the GTP hydrolysis activity. Inhibited by GDP dissociation inhibitors (GDIs). Its function is as follows. The small GTPases Rab are key regulators of intracellular membrane trafficking, from the formation of transport vesicles to their fusion with membranes. Rabs cycle between an inactive GDP-bound form and an active GTP-bound form that is able to recruit to membranes different sets of downstream effectors directly responsible for vesicle formation, movement, tethering and fusion. This chain is Ras-related protein Rab-5C (RAB5C), found in Canis lupus familiaris (Dog).